The primary structure comprises 407 residues: Imidazolonepropionase (407 aa).

Positions 68 and 70 each coordinate Fe(3+). Zn(2+) contacts are provided by histidine 68 and histidine 70. Residues arginine 77, tyrosine 140, and histidine 173 each contribute to the 4-imidazolone-5-propanoate site. Tyrosine 140 is a binding site for N-formimidoyl-L-glutamate. Histidine 238 is a binding site for Fe(3+). Histidine 238 provides a ligand contact to Zn(2+). Position 241 (glutamine 241) interacts with 4-imidazolone-5-propanoate. A Fe(3+)-binding site is contributed by aspartate 313. Aspartate 313 contributes to the Zn(2+) binding site. N-formimidoyl-L-glutamate contacts are provided by asparagine 315 and glycine 317. Threonine 318 contacts 4-imidazolone-5-propanoate.

It belongs to the metallo-dependent hydrolases superfamily. HutI family. It depends on Zn(2+) as a cofactor. Fe(3+) is required as a cofactor.

It localises to the cytoplasm. The catalysed reaction is 4-imidazolone-5-propanoate + H2O = N-formimidoyl-L-glutamate. It participates in amino-acid degradation; L-histidine degradation into L-glutamate; N-formimidoyl-L-glutamate from L-histidine: step 3/3. Its function is as follows. Catalyzes the hydrolytic cleavage of the carbon-nitrogen bond in imidazolone-5-propanoate to yield N-formimidoyl-L-glutamate. It is the third step in the universal histidine degradation pathway. The protein is Imidazolonepropionase of Burkholderia ambifaria (strain MC40-6).